Consider the following 984-residue polypeptide: Protein translocase subunit SecA (984 aa).

ATP is bound by residues Q96, 114–118, and D595; that span reads GEGKT. Composition is skewed to basic and acidic residues over residues 930–942 and 952–971; these read EHEE…RLLE and KSDK…EERL. The interval 930 to 984 is disordered; that stretch reads EHEEEKKHQRLLEEAELQGVQGKSDKKPRPKTLKERLKEERLRKRKLKAKKKEQE. Over residues 972–984 the composition is skewed to basic residues; the sequence is RKRKLKAKKKEQE.

The protein belongs to the SecA family. As to quaternary structure, monomer and homodimer. Part of the essential Sec protein translocation apparatus which comprises SecA, SecYEG and auxiliary proteins SecDF. Other proteins may also be involved.

Its subcellular location is the cell inner membrane. The protein resides in the cytoplasm. The enzyme catalyses ATP + H2O + cellular proteinSide 1 = ADP + phosphate + cellular proteinSide 2.. Functionally, part of the Sec protein translocase complex. Interacts with the SecYEG preprotein conducting channel. Has a central role in coupling the hydrolysis of ATP to the transfer of proteins into and across the cell membrane, serving as an ATP-driven molecular motor driving the stepwise translocation of polypeptide chains across the membrane. This chain is Protein translocase subunit SecA, found in Aquifex aeolicus (strain VF5).